A 202-amino-acid chain; its full sequence is Small ribosomal subunit protein uS2 (202 aa).

Belongs to the universal ribosomal protein uS2 family.

This chain is Small ribosomal subunit protein uS2 (rps2), found in Pyrococcus horikoshii (strain ATCC 700860 / DSM 12428 / JCM 9974 / NBRC 100139 / OT-3).